A 296-amino-acid polypeptide reads, in one-letter code: MMFKQYLQVTKPGIIFGNLISVIGGFLLASKGSIDYPLFIYTLVGVSLVVASGCVFNNYIDRDIDRKMERTKNRVLVKGLISPAVSLVYATLLGIAGFMLLWFGANPLACWLGVMGFVVYVGVYSLYMKRHSVYGTLIGSLSGAAPSVIGYCAVTGEFDSGAAILLAIFSLWQMPHSYAIAIFRFKDYQAANIPVLPVVKGISVAKNHITLYIIAFAVATLMLSLGGYAGYKYLVVAAAVSVWWLGMALRGYKVADDRIWARKLFGFSIIAITALSVMMSVDFMVPDSHTLLAAVW.

Residues 1–9 lie on the Cytoplasmic side of the membrane; the sequence is MMFKQYLQV. A helical membrane pass occupies residues 10-28; the sequence is TKPGIIFGNLISVIGGFLL. At 29-37 the chain is on the periplasmic side; the sequence is ASKGSIDYP. Residues 38-56 form a helical membrane-spanning segment; the sequence is LFIYTLVGVSLVVASGCVF. Over 57–78 the chain is Cytoplasmic; it reads NNYIDRDIDRKMERTKNRVLVK. A helical transmembrane segment spans residues 79–97; the sequence is GLISPAVSLVYATLLGIAG. Residues 98–107 are Periplasmic-facing; sequence FMLLWFGANP. Residues 108–126 traverse the membrane as a helical segment; that stretch reads LACWLGVMGFVVYVGVYSL. The Cytoplasmic segment spans residues 127 to 197; it reads YMKRHSVYGT…YQAANIPVLP (71 aa). Residues 198 to 216 form a helical membrane-spanning segment; it reads VVKGISVAKNHITLYIIAF. Over 217-228 the chain is Periplasmic; that stretch reads AVATLMLSLGGY. The helical transmembrane segment at 229 to 247 threads the bilayer; it reads AGYKYLVVAAAVSVWWLGM. Residues 248-268 are Cytoplasmic-facing; it reads ALRGYKVADDRIWARKLFGFS. A helical transmembrane segment spans residues 269–287; that stretch reads IIAITALSVMMSVDFMVPD. At 288-296 the chain is on the periplasmic side; sequence SHTLLAAVW.

This sequence belongs to the UbiA prenyltransferase family. Protoheme IX farnesyltransferase subfamily.

The protein resides in the cell inner membrane. It catalyses the reaction heme b + (2E,6E)-farnesyl diphosphate + H2O = Fe(II)-heme o + diphosphate. It functions in the pathway porphyrin-containing compound metabolism; heme O biosynthesis; heme O from protoheme: step 1/1. Its function is as follows. Converts heme B (protoheme IX) to heme O by substitution of the vinyl group on carbon 2 of heme B porphyrin ring with a hydroxyethyl farnesyl side group. This chain is Protoheme IX farnesyltransferase, found in Shigella flexneri.